Reading from the N-terminus, the 478-residue chain is MTLSFITRWRDELPETYTALSPTPLNNARLIWHNTELANTLSIPSSLFKNSAGVWGGENLLPGMSPLAQVYSGHQFGVWAGQLGDGRGILLGEQLLADGTTMDWHLKGAGLTPYSRMGDGRAVLRSTIRESLASEAMHYLGIPTTRALSIVTSDSPVYRETVESGAMLMRVAPSHLRFGHFEHFYYRREPEKVRQLADFAIRHYWSHLDDEEDKYRLWFTDVVARTASLIAQWQTVGFAHGVMNTDNMSLLGLTLDYGPFGFLDDYEPGFICNHSDHQGRYSFDNQPAVALWNLQRLAQTLSPFVAVDALNEALDSYQQVLLTHYGQRMRQKLGFMTEQKEDNALLNELFSLMARERSDYTRTFRMLSLTEQHSAASPLRDEFIDRAAFDDWFARYRGRLQQDEITDSERQQLMQSVNPALVLRNWLAQRAIEAAEKGDMTELHRLHEALRNPFSDRDDDYVSRPPDWGKRLEVSCSS.

ATP-binding residues include Gly84, Gly86, Arg87, Lys107, Asp119, Gly120, Arg170, and Arg177. The Proton acceptor role is filled by Asp246. Residues Asn247 and Asp256 each contribute to the Mg(2+) site. Asp256 contacts ATP.

Belongs to the SELO family. Requires Mg(2+) as cofactor. Mn(2+) is required as a cofactor.

The enzyme catalyses L-seryl-[protein] + ATP = 3-O-(5'-adenylyl)-L-seryl-[protein] + diphosphate. It carries out the reaction L-threonyl-[protein] + ATP = 3-O-(5'-adenylyl)-L-threonyl-[protein] + diphosphate. It catalyses the reaction L-tyrosyl-[protein] + ATP = O-(5'-adenylyl)-L-tyrosyl-[protein] + diphosphate. The catalysed reaction is L-histidyl-[protein] + UTP = N(tele)-(5'-uridylyl)-L-histidyl-[protein] + diphosphate. The enzyme catalyses L-seryl-[protein] + UTP = O-(5'-uridylyl)-L-seryl-[protein] + diphosphate. It carries out the reaction L-tyrosyl-[protein] + UTP = O-(5'-uridylyl)-L-tyrosyl-[protein] + diphosphate. Its function is as follows. Nucleotidyltransferase involved in the post-translational modification of proteins. It can catalyze the addition of adenosine monophosphate (AMP) or uridine monophosphate (UMP) to a protein, resulting in modifications known as AMPylation and UMPylation. The polypeptide is Protein nucleotidyltransferase YdiU (Escherichia coli O6:K15:H31 (strain 536 / UPEC)).